The following is a 30-amino-acid chain: Bacteriocin curvaticin (30 aa).

Cysteine 9 and cysteine 14 are joined by a disulfide.

It is found in the secreted. Has antibacterial activity against the Gram-positive bacterium L.monocytogenes. This Latilactobacillus curvatus (Lactobacillus curvatus) protein is Bacteriocin curvaticin.